Reading from the N-terminus, the 305-residue chain is Ribosomal RNA large subunit methyltransferase F (305 aa).

This sequence belongs to the methyltransferase superfamily. METTL16/RlmF family.

Its subcellular location is the cytoplasm. It catalyses the reaction adenosine(1618) in 23S rRNA + S-adenosyl-L-methionine = N(6)-methyladenosine(1618) in 23S rRNA + S-adenosyl-L-homocysteine + H(+). In terms of biological role, specifically methylates the adenine in position 1618 of 23S rRNA. The protein is Ribosomal RNA large subunit methyltransferase F of Bacteroides fragilis (strain YCH46).